The chain runs to 354 residues: Guanine nucleotide-binding protein alpha-3 subunit (354 aa).

Residue Gly-2 is the site of N-myristoyl glycine attachment. The S-palmitoyl cysteine moiety is linked to residue Cys-4. In terms of domain architecture, G-alpha spans 33-354 (KECKILLLGS…TNALKDSGIL (322 aa)). A G1 motif region spans residues 36–49 (KILLLGSGESGKST). GTP is bound by residues 41 to 48 (GSGESGKS), 177 to 183 (LRARSKT), 202 to 206 (DVGGQ), 271 to 274 (NKID), and Ala-326. Mg(2+)-binding residues include Ser-48 and Thr-183. The tract at residues 175-183 (DVLRARSKT) is G2 motif. The tract at residues 198-207 (IHLFDVGGQR) is G3 motif. A G4 motif region spans residues 267–274 (ILFLNKID). The segment at 324 to 329 (TQATDT) is G5 motif.

Belongs to the G-alpha family. In terms of assembly, g proteins are composed of 3 units; alpha, beta and gamma. The alpha chain contains the guanine nucleotide binding site.

In terms of biological role, guanine nucleotide-binding proteins (G proteins) are involved as modulators or transducers in various transmembrane signaling systems. GPA3 plays an active role in transmission of the pheromone signal. This chain is Guanine nucleotide-binding protein alpha-3 subunit (GPA3), found in Mycosarcoma maydis (Corn smut fungus).